The primary structure comprises 337 residues: MDLDVVNMFVIAGGTLAIPILAFVASFLLWPSALIRIYYWYWRRTLGMQVRYVHHEDYQFCYSFRGRPGHKPSILMLHGFSAHKDMWLSVVKFLPKNLHLVCVDMPGHEGTTRSSLDDLSIDGQVKRIHQFVECLKLNKKPFHLVGTSMGGQVAGVYAAYYPSDVSSLCLVCPAGLQYSTDNQFVQRLKELQGSAAVEKIPLIPSTPEEMSEMLQLCSYVRFKVPQQILQGLVDVRIPHNNFYRKLFLEIVSEKSRYSLHQNMDKIKVPTQIIWGKQDQVLDVSGADMLAKSIANCQVELLENCGHSVVMERPRKTAKLIIDFLASVHNTDNNKKLD.

Residues 1-8 (MDLDVVNM) lie on the Extracellular side of the membrane. A helical; Signal-anchor for type II membrane protein transmembrane segment spans residues 9–29 (FVIAGGTLAIPILAFVASFLL). The Cytoplasmic segment spans residues 30-337 (WPSALIRIYY…HNTDNNKKLD (308 aa)). An AB hydrolase-1 domain is found at 72 to 313 (PSILMLHGFS…CGHSVVMERP (242 aa)). Residue Phe-80 participates in (9Z)-octadecenoate binding. Catalysis depends on Ser-148, which acts as the Nucleophile. Met-149 serves as a coordination point for (9Z)-octadecenoate. Catalysis depends on charge relay system residues Asp-278 and His-306. A (9Z)-octadecenoate-binding site is contributed by His-306.

Belongs to the AB hydrolase superfamily.

It is found in the late endosome membrane. It localises to the lysosome membrane. The protein localises to the mitochondrion membrane. It carries out the reaction Hydrolyzes glycerol monoesters of long-chain fatty acids.. It catalyses the reaction 1-octanoylglycerol + H2O = octanoate + glycerol + H(+). The enzyme catalyses 1-decanoylglycerol + H2O = decanoate + glycerol + H(+). The catalysed reaction is 1-dodecanoylglycerol + H2O = dodecanoate + glycerol + H(+). It carries out the reaction 1-tetradecanoylglycerol + H2O = tetradecanoate + glycerol + H(+). It catalyses the reaction 2-hexadecanoylglycerol + H2O = glycerol + hexadecanoate + H(+). The enzyme catalyses 2-(9Z-octadecenoyl)-glycerol + H2O = glycerol + (9Z)-octadecenoate + H(+). The catalysed reaction is 1-(9Z-octadecenoyl)-glycerol + H2O = glycerol + (9Z)-octadecenoate + H(+). It carries out the reaction 2-(9Z,12Z-octadecadienoyl)-glycerol + H2O = (9Z,12Z)-octadecadienoate + glycerol + H(+). It catalyses the reaction 2-(5Z,8Z,11Z,14Z-eicosatetraenoyl)-glycerol + H2O = glycerol + (5Z,8Z,11Z,14Z)-eicosatetraenoate + H(+). The enzyme catalyses 1-(5Z,8Z,11Z,14Z-eicosatetraenoyl)-glycerol + H2O = glycerol + (5Z,8Z,11Z,14Z)-eicosatetraenoate + H(+). The catalysed reaction is 1-(9Z,12Z-octadecadienoyl)-glycerol + H2O = (9Z,12Z)-octadecadienoate + glycerol + H(+). It carries out the reaction 3-(9Z-octadecenoyl)-sn-glycero-1-phospho-(3'-(9Z-octadecenoyl)-1'-sn-glycerol) + H2O = 3-(9Z-octadecenoyl)-sn-glycero-1-phospho-(1'-sn-glycerol) + (9Z)-octadecenoate + H(+). It catalyses the reaction (S,S)-2-(9Z-octadecenoyl)-sn-glycero-1-phospho-(2'-(9Z-octadecenoyl)-1'-sn-glycerol) + H2O = (S,S)-2-(9Z-octadecenoyl)-sn-glycero-1-phospho-(1'-sn-glycerol) + (9Z)-octadecenoate + H(+). The enzyme catalyses (R,R)-2-(9Z-octadecenoyl)-sn-glycero-3-phospho-(2'-(9Z-octadecenoyl)-3'-sn-glycerol) + H2O = (R,R)-2-(9Z-octadecenoyl)-sn-glycero-3-phospho-(3'-sn-glycerol) + (9Z)-octadecenoate + H(+). Its function is as follows. Lipase that preferentially hydrolysis medium-chain saturated monoacylglycerols including 2-arachidonoylglycerol. Through 2-arachidonoylglycerol degradation may regulate endocannabinoid signaling pathways. Also has a lysophosphatidyl lipase activity with a preference for lysophosphatidylglycerol among other lysophospholipids. Also able to degrade bis(monoacylglycero)phosphate (BMP) and constitutes the major enzyme for BMP catabolism. BMP, also known as lysobisphosphatidic acid, is enriched in late endosomes and lysosomes and plays a key role in the formation of intraluminal vesicles and in lipid sorting. This is Monoacylglycerol lipase ABHD6 from Homo sapiens (Human).